The chain runs to 217 residues: Cytidylate kinase (217 aa).

Residue 21–29 coordinates ATP; that stretch reads GPAASGKGT.

This sequence belongs to the cytidylate kinase family. Type 1 subfamily.

Its subcellular location is the cytoplasm. The enzyme catalyses CMP + ATP = CDP + ADP. The catalysed reaction is dCMP + ATP = dCDP + ADP. The protein is Cytidylate kinase of Rickettsia bellii (strain OSU 85-389).